The following is a 210-amino-acid chain: Guanylate kinase (210 aa).

Residues 6–184 (GNIYIVVAPS…ARLDLISIVR (179 aa)) enclose the Guanylate kinase-like domain. 13–20 (APSGAGKT) contributes to the ATP binding site.

The protein belongs to the guanylate kinase family.

It is found in the cytoplasm. The enzyme catalyses GMP + ATP = GDP + ADP. Functionally, essential for recycling GMP and indirectly, cGMP. In Chromobacterium violaceum (strain ATCC 12472 / DSM 30191 / JCM 1249 / CCUG 213 / NBRC 12614 / NCIMB 9131 / NCTC 9757 / MK), this protein is Guanylate kinase.